Consider the following 465-residue polypeptide: Cysteine--tRNA ligase (465 aa).

Residue cysteine 27 participates in Zn(2+) binding. The 'HIGH' region signature appears at 29 to 39 (PTVYDEVHIGH). Cysteine 204, histidine 229, and glutamate 233 together coordinate Zn(2+). Residues 261-265 (KMSKS) carry the 'KMSKS' region motif. Lysine 264 contacts ATP.

It belongs to the class-I aminoacyl-tRNA synthetase family. It depends on Zn(2+) as a cofactor.

It is found in the cytoplasm. It catalyses the reaction tRNA(Cys) + L-cysteine + ATP = L-cysteinyl-tRNA(Cys) + AMP + diphosphate. The protein is Cysteine--tRNA ligase of Metallosphaera sedula (strain ATCC 51363 / DSM 5348 / JCM 9185 / NBRC 15509 / TH2).